The following is an 86-amino-acid chain: Photosystem I reaction center subunit PsaK (86 aa).

The next 2 membrane-spanning stretches (helical) occupy residues 15-35 (SWSI…IGLG) and 57-77 (GLPE…GAII).

Belongs to the PsaG/PsaK family.

Its subcellular location is the plastid. It is found in the chloroplast thylakoid membrane. In Gracilaria tenuistipitata var. liui (Red alga), this protein is Photosystem I reaction center subunit PsaK.